The following is a 332-amino-acid chain: 2,3-diketo-L-gulonate reductase (332 aa).

His-44 serves as the catalytic Proton donor. NAD(+) contacts are provided by residues Ile-168–Ser-174, Trp-224–Lys-225, and Gly-304–Glu-306.

Belongs to the LDH2/MDH2 oxidoreductase family. DlgD subfamily. As to quaternary structure, homodimer.

It is found in the cytoplasm. It catalyses the reaction 3-dehydro-L-gulonate + NAD(+) = 2,3-dioxo-L-gulonate + NADH + H(+). The enzyme catalyses 3-dehydro-L-gulonate + NADP(+) = 2,3-dioxo-L-gulonate + NADPH + H(+). Catalyzes the reduction of 2,3-diketo-L-gulonate in the presence of NADH, to form 3-keto-L-gulonate. The chain is 2,3-diketo-L-gulonate reductase from Escherichia coli O6:K15:H31 (strain 536 / UPEC).